The sequence spans 428 residues: MRRCAVLHRLRCKFYVFVVSLFVVVKLVYLKISMDNSIYIEPYGVTRRSLKPQPLDGINCTAIYDLEPVEIGKSLEMRRKKIVEVDDGRIASFTADCKSYIEQRRYNEVLVTDEECNFPIAYSLVVHKNSAMVERILRAIYAPQNIYCIHYDQKSTKDFIAAMKNLESCFPNVFIASKIESVQYAHITRLKADLNCLSDLLSSEVKWKYVINLCGQDFPLKSNYELVTELRKLNGANMLETSRPSKVKKQRFQFRYQLKDVSYEYQKMPVKTSIAKDPPPHNIEMFVGSAYFVLSRDFVTYVMNNQLAKDFLQWSVDTYSPDEHFWASMARVPGVPGELARSEPDVSDLKSRTRLVKWNYLEERLYPKCTGTHRRSVCIYGAAELRWLLEDGHWFANKFDPKVDPVIIKCLEEKLEEKQLQQCLRRVS.

At 1–12 (MRRCAVLHRLRC) the chain is on the cytoplasmic side. A helical; Signal-anchor for type II membrane protein transmembrane segment spans residues 13-30 (KFYVFVVSLFVVVKLVYL). Topologically, residues 31–428 (KISMDNSIYI…QLQQCLRRVS (398 aa)) are lumenal. Residue asparagine 59 is glycosylated (N-linked (GlcNAc...) asparagine). Disulfide bonds link cysteine 60/cysteine 214, cysteine 148/cysteine 369, cysteine 169/cysteine 196, and cysteine 378/cysteine 410.

The protein belongs to the glycosyltransferase 14 family.

It localises to the golgi apparatus membrane. It carries out the reaction a 3-O-[beta-D-galactosyl-(1-&gt;3)-N-acetyl-alpha-D-galactosaminyl]-L-seryl-[protein] + UDP-N-acetyl-alpha-D-glucosamine = 3-O-{beta-D-galactosyl-(1-&gt;3)-[N-acetyl-beta-D-glucosaminyl-(1-&gt;6)]-N-acetyl-alpha-D-galactosaminyl}-L-seryl-[protein] + UDP + H(+). It catalyses the reaction a 3-O-[beta-D-galactosyl-(1-&gt;3)-N-acetyl-alpha-D-galactosaminyl]-L-threonyl-[protein] + UDP-N-acetyl-alpha-D-glucosamine = a 3-O-{beta-D-galactosyl-(1-&gt;3)-[N-acetyl-beta-D-glucosaminyl-(1-&gt;6)]-N-acetyl-alpha-D-galactosaminyl}-L-threonyl-[protein] + UDP + H(+). It participates in protein modification; protein glycosylation. Glycosyltransferase that mediates core 2 O-glycan branching, an important step in mucin-type biosynthesis. The polypeptide is Beta-1,3-galactosyl-O-glycosyl-glycoprotein beta-1,6-N-acetylglucosaminyltransferase 4 (gcnt4) (Danio rerio (Zebrafish)).